The primary structure comprises 287 residues: 4-diphosphocytidyl-2-C-methyl-D-erythritol kinase (287 aa).

Lysine 11 is an active-site residue. Proline 93–serine 103 serves as a coordination point for ATP. Aspartate 135 is a catalytic residue.

It belongs to the GHMP kinase family. IspE subfamily.

The enzyme catalyses 4-CDP-2-C-methyl-D-erythritol + ATP = 4-CDP-2-C-methyl-D-erythritol 2-phosphate + ADP + H(+). It functions in the pathway isoprenoid biosynthesis; isopentenyl diphosphate biosynthesis via DXP pathway; isopentenyl diphosphate from 1-deoxy-D-xylulose 5-phosphate: step 3/6. Its function is as follows. Catalyzes the phosphorylation of the position 2 hydroxy group of 4-diphosphocytidyl-2C-methyl-D-erythritol. The chain is 4-diphosphocytidyl-2-C-methyl-D-erythritol kinase from Chlorobium luteolum (strain DSM 273 / BCRC 81028 / 2530) (Pelodictyon luteolum).